We begin with the raw amino-acid sequence, 278 residues long: Tryptophan synthase alpha chain (278 aa).

Catalysis depends on proton acceptor residues Glu50 and Asp61.

This sequence belongs to the TrpA family. Tetramer of two alpha and two beta chains.

The enzyme catalyses (1S,2R)-1-C-(indol-3-yl)glycerol 3-phosphate + L-serine = D-glyceraldehyde 3-phosphate + L-tryptophan + H2O. It functions in the pathway amino-acid biosynthesis; L-tryptophan biosynthesis; L-tryptophan from chorismate: step 5/5. Its function is as follows. The alpha subunit is responsible for the aldol cleavage of indoleglycerol phosphate to indole and glyceraldehyde 3-phosphate. The chain is Tryptophan synthase alpha chain from Nitrobacter winogradskyi (strain ATCC 25391 / DSM 10237 / CIP 104748 / NCIMB 11846 / Nb-255).